The chain runs to 550 residues: MNGSADAGPRPRKYVFITGGVVSSLGKGILTSSLGALLRARGYRVTAIKIDPYVNVDAGTMRPYEHGEVFVTADGAETDLDIGHYERFLDMDLSRGNNLTTGQVYLSVIQKERRGEYLSQTVQVIPHITDEIKERIRKVAEEQKAEIVVVEVGGTVGDIESLPFLEAIRQFRFDEGEGNTLYLHLTLVPYLETSEEFKTKPTQHSVATLRGVGIQPDILVLRSARPVPEEVRRKVALFTNVRPGHVFSSPTVEHLYEVPLLLEEQGLGRAVERALGLEAVIPNLAFWQEAVRVLKHPERTVKIAIAGKYVKMPDAYLSLLEALRHAGIKNRARVEVKWVDAESLEAADLDEAFRDVSGILVPGGFGVRGIEGKVRAAQYARERKIPYLGICLGLQIAVIEFARNVAGLKGANSTEFDPYTPHPVIDLMPEQLEVEGLGGTMRLGDWPMRIKPGTLLHRLYGKEEVLERHRHRYEVNPLYVDGLERAGLVVSATTPGMRGRGAGLVEAIELKDHPFFLGLQSHPEFKSRPMRPSPPFVGFVEAALAYQERA.

The interval 1–277 (MNGSADAGPR…GRAVERALGL (277 aa)) is amidoligase domain. S23 is a CTP binding site. S23 is a binding site for UTP. Residue 24–29 (SLGKGI) coordinates ATP. Y64 is an L-glutamine binding site. Position 81 (D81) interacts with ATP. D81 and E151 together coordinate Mg(2+). Residues 158 to 160 (DIE), 198 to 203 (KTKPTQ), and K234 each bind CTP. UTP-binding positions include 198–203 (KTKPTQ) and K234. Positions 302 to 549 (KIAIAGKYVK…VEAALAYQER (248 aa)) constitute a Glutamine amidotransferase type-1 domain. L-glutamine is bound at residue G364. The active-site Nucleophile; for glutamine hydrolysis is the C391. L-glutamine contacts are provided by residues 392-395 (LGLQ), E415, and R472. Active-site residues include H522 and E524.

This sequence belongs to the CTP synthase family. As to quaternary structure, homotetramer.

It catalyses the reaction UTP + L-glutamine + ATP + H2O = CTP + L-glutamate + ADP + phosphate + 2 H(+). The enzyme catalyses L-glutamine + H2O = L-glutamate + NH4(+). It carries out the reaction UTP + NH4(+) + ATP = CTP + ADP + phosphate + 2 H(+). It functions in the pathway pyrimidine metabolism; CTP biosynthesis via de novo pathway; CTP from UDP: step 2/2. With respect to regulation, allosterically activated by GTP, when glutamine is the substrate; GTP has no effect on the reaction when ammonia is the substrate. The allosteric effector GTP functions by stabilizing the protein conformation that binds the tetrahedral intermediate(s) formed during glutamine hydrolysis. Inhibited by the product CTP, via allosteric rather than competitive inhibition. In terms of biological role, catalyzes the ATP-dependent amination of UTP to CTP with either L-glutamine or ammonia as the source of nitrogen. Regulates intracellular CTP levels through interactions with the four ribonucleotide triphosphates. The chain is CTP synthase from Thermus thermophilus (strain ATCC BAA-163 / DSM 7039 / HB27).